Here is a 119-residue protein sequence, read N- to C-terminus: Large ribosomal subunit protein bL20 (119 aa).

The protein belongs to the bacterial ribosomal protein bL20 family.

Functionally, binds directly to 23S ribosomal RNA and is necessary for the in vitro assembly process of the 50S ribosomal subunit. It is not involved in the protein synthesizing functions of that subunit. This is Large ribosomal subunit protein bL20 from Streptococcus thermophilus (strain ATCC BAA-491 / LMD-9).